The chain runs to 128 residues: Ribonuclease P protein component 4 (128 aa).

Zn(2+)-binding residues include C63, C66, C92, and C95.

Belongs to the eukaryotic/archaeal RNase P protein component 4 family. As to quaternary structure, consists of a catalytic RNA component and at least 4 protein subunits. Forms a subcomplex with Rnp1 which stimulates the catalytic RNA. Requires Zn(2+) as cofactor.

It localises to the cytoplasm. It catalyses the reaction Endonucleolytic cleavage of RNA, removing 5'-extranucleotides from tRNA precursor.. In terms of biological role, part of ribonuclease P, a protein complex that generates mature tRNA molecules by cleaving their 5'-ends. In Methanocaldococcus jannaschii (strain ATCC 43067 / DSM 2661 / JAL-1 / JCM 10045 / NBRC 100440) (Methanococcus jannaschii), this protein is Ribonuclease P protein component 4.